Consider the following 88-residue polypeptide: Kunitz-type U15-theraphotoxin-Hhn1m (88 aa).

An N-terminal signal peptide occupies residues Met-1–Ala-27. The propeptide occupies Asp-28–Arg-33. Positions Cys-37–Cys-85 constitute a BPTI/Kunitz inhibitor domain. Intrachain disulfides connect Cys-37-Cys-85 and Cys-60-Cys-81.

Belongs to the venom Kunitz-type family. 01 (intermediate) subfamily. In terms of tissue distribution, expressed by the venom gland.

It is found in the secreted. Functionally, serine protease inhibitor that inhibits trypsin at a molar ratio of 1:1. In Cyriopagopus hainanus (Chinese bird spider), this protein is Kunitz-type U15-theraphotoxin-Hhn1m.